Consider the following 228-residue polypeptide: Tungstate uptake system permease protein TupB (228 aa).

5 consecutive transmembrane segments (helical) span residues 25–45, 65–85, 102–122, 144–164, and 203–223; these read IIFLSVFVSSTATAIAAAVSI, VLYSLMSVPSVIVGLVVAIGL, AMIIAQALLVFPLCLGLTYSL, VIILIIRELKAELFINVVTTF, and MAIALGLVLLMISFAINAVIY. The region spanning 26–222 is the ABC transmembrane type-1 domain; that stretch reads IFLSVFVSST…MISFAINAVI (197 aa).

This sequence belongs to the binding-protein-dependent transport system permease family. The complex is composed of two ATP-binding proteins (TupC), two transmembrane proteins (TupB) and a solute-binding protein (TupA).

The protein resides in the cell membrane. Part of an ABC transporter complex involved in tungstate uptake. Probably responsible for the translocation of the substrate across the membrane. This chain is Tungstate uptake system permease protein TupB, found in Peptoclostridium acidaminophilum (Eubacterium acidaminophilum).